The sequence spans 156 residues: Small ribosomal subunit protein uS7 (156 aa).

It belongs to the universal ribosomal protein uS7 family. Part of the 30S ribosomal subunit. Contacts proteins S9 and S11.

Its function is as follows. One of the primary rRNA binding proteins, it binds directly to 16S rRNA where it nucleates assembly of the head domain of the 30S subunit. Is located at the subunit interface close to the decoding center, probably blocks exit of the E-site tRNA. The sequence is that of Small ribosomal subunit protein uS7 from Dechloromonas aromatica (strain RCB).